Here is a 224-residue protein sequence, read N- to C-terminus: Probable 2' cyclic ADP-D-ribose synthase BdTIR (224 aa).

One can recognise a TIR domain in the interval 51–178 (SRYEVFINHR…RFKFALREAK (128 aa)). NAD(+) contacts are provided by residues 60–65 (RGVDTK) and Gly93. Residue Glu127 is part of the active site.

Homodimer.

The enzyme catalyses NAD(+) + H2O = ADP-D-ribose + nicotinamide + H(+). It carries out the reaction NADP(+) + H2O = ADP-D-ribose 2'-phosphate + nicotinamide + H(+). It catalyses the reaction NAD(+) = 2'cADPR + nicotinamide + H(+). Functionally, an NAD(+) hydrolase (NADase). Upon activation catalyzes cleavage of NAD(+) into ADP-D-ribose (ADPR) and nicotinamide; NAD(+) cleavage triggers a defense system that promotes cell death. In addition to ADPR, also generates a cyclization variant of cyclic ADPR termed v-cADPR (2'cADPR). Also hydrolyzes NADP(+), but not other NAD(+)-related molecules. v-cADPR activates ThsA, an NAD(+) hydrolase in B.cereus (AC J8G6Z1). Probably makes 2'cADPR; the cADPR made by this protein is bound by cmTad1 (AC P0DW61) and activates ThsA from B.cereus. Boiling cmTad1 bound to the cyclic nucleotide releases 2'cADPR, strongly suggesting it is the product of this protein. The protein is Probable 2' cyclic ADP-D-ribose synthase BdTIR of Brachypodium distachyon (Purple false brome).